The following is a 274-amino-acid chain: 4-hydroxy-tetrahydrodipicolinate reductase (274 aa).

12–17 (GAAGRM) contributes to the NAD(+) binding site. R39 provides a ligand contact to NADP(+). NAD(+) contacts are provided by residues 102–104 (GTT) and 126–129 (SGNM). The active-site Proton donor/acceptor is H160. H161 is a binding site for (S)-2,3,4,5-tetrahydrodipicolinate. K164 functions as the Proton donor in the catalytic mechanism. 170 to 171 (GT) is a (S)-2,3,4,5-tetrahydrodipicolinate binding site.

This sequence belongs to the DapB family.

The protein localises to the cytoplasm. The catalysed reaction is (S)-2,3,4,5-tetrahydrodipicolinate + NAD(+) + H2O = (2S,4S)-4-hydroxy-2,3,4,5-tetrahydrodipicolinate + NADH + H(+). It catalyses the reaction (S)-2,3,4,5-tetrahydrodipicolinate + NADP(+) + H2O = (2S,4S)-4-hydroxy-2,3,4,5-tetrahydrodipicolinate + NADPH + H(+). It participates in amino-acid biosynthesis; L-lysine biosynthesis via DAP pathway; (S)-tetrahydrodipicolinate from L-aspartate: step 4/4. Catalyzes the conversion of 4-hydroxy-tetrahydrodipicolinate (HTPA) to tetrahydrodipicolinate. This chain is 4-hydroxy-tetrahydrodipicolinate reductase, found in Rhizobium rhizogenes (strain K84 / ATCC BAA-868) (Agrobacterium radiobacter).